Here is a 421-residue protein sequence, read N- to C-terminus: Elsinochrome C biosynthesis regulatory protein elcR (421 aa).

Residues 1 to 16 (MATQLPSPTATTSHSG) show a composition bias toward polar residues. Positions 1–20 (MATQLPSPTATTSHSGNEPR) are disordered. The segment at residues 27-54 (CNNCSAQKIRCGKQRPACARCVNKKLQC) is a DNA-binding region (zn(2)-C6 fungal-type).

It is found in the nucleus. Functionally, transcription regulator of the gene cluster that mediates the biosynthesis of elsinochrome C, a perelyenequinone phytotoxin structurally similar to cercosporin. The polypeptide is Elsinochrome C biosynthesis regulatory protein elcR (Phaeosphaeria nodorum (strain SN15 / ATCC MYA-4574 / FGSC 10173) (Glume blotch fungus)).